Reading from the N-terminus, the 448-residue chain is Trigger factor (448 aa).

A PPIase FKBP-type domain is found at 172–257; the sequence is GDRVTVDFVG…MKKVEWPHLP (86 aa).

It belongs to the FKBP-type PPIase family. Tig subfamily.

It is found in the cytoplasm. It carries out the reaction [protein]-peptidylproline (omega=180) = [protein]-peptidylproline (omega=0). Involved in protein export. Acts as a chaperone by maintaining the newly synthesized protein in an open conformation. Functions as a peptidyl-prolyl cis-trans isomerase. In Burkholderia multivorans (strain ATCC 17616 / 249), this protein is Trigger factor.